The sequence spans 148 residues: Cyanate hydratase (148 aa).

Catalysis depends on residues Arg89, Glu92, and Ser115.

The protein belongs to the cyanase family.

It catalyses the reaction cyanate + hydrogencarbonate + 3 H(+) = NH4(+) + 2 CO2. Functionally, catalyzes the reaction of cyanate with bicarbonate to produce ammonia and carbon dioxide. The polypeptide is Cyanate hydratase (Sulfurisphaera tokodaii (strain DSM 16993 / JCM 10545 / NBRC 100140 / 7) (Sulfolobus tokodaii)).